Consider the following 283-residue polypeptide: Homeobox protein six1a (283 aa).

The segment at residues 124–183 (GEETSYCFKEKSRSVLREWYTHNPYPSPREKRELAEATGLTTTQVSNWFKNRRQRDRAAE) is a DNA-binding region (homeobox). Residues 168–264 (VSNWFKNRRQ…PLHGMQGHPH (97 aa)) form a disordered region. A compositionally biased stretch (basic and acidic residues) spans 179–190 (DRAAEAKERENG). Residues 237–248 (MNNPAAPAYPMP) are compositionally biased toward low complexity.

The protein belongs to the SIX/Sine oculis homeobox family.

It is found in the nucleus. The protein resides in the cytoplasm. In terms of biological role, transcription factor that is involved in the regulation of cell proliferation, apoptosis and embryonic development. Depending on context, functions as a transcriptional repressor or activator. Plays an important role in the development of the inner ear, where it promotes hair cell proliferation and inhibits proliferation of neural progenitor cells. Required for normal myogenesis. Plays a role in the development of fast muscle fibers throughout the body, as well as the development of craniofacial muscles. The sequence is that of Homeobox protein six1a (six1a) from Danio rerio (Zebrafish).